The primary structure comprises 499 residues: Histidine ammonia-lyase (499 aa).

The 5-imidazolinone (Ala-Gly) cross-link spans 142 to 144; the sequence is ASG. Ser143 carries the post-translational modification 2,3-didehydroalanine (Ser).

The protein belongs to the PAL/histidase family. In terms of processing, contains an active site 4-methylidene-imidazol-5-one (MIO), which is formed autocatalytically by cyclization and dehydration of residues Ala-Ser-Gly.

The protein localises to the cytoplasm. It carries out the reaction L-histidine = trans-urocanate + NH4(+). The protein operates within amino-acid degradation; L-histidine degradation into L-glutamate; N-formimidoyl-L-glutamate from L-histidine: step 1/3. This Staphylococcus saprophyticus subsp. saprophyticus (strain ATCC 15305 / DSM 20229 / NCIMB 8711 / NCTC 7292 / S-41) protein is Histidine ammonia-lyase.